We begin with the raw amino-acid sequence, 175 residues long: Apoptosis regulatory protein Siva (175 aa).

Y34 carries the phosphotyrosine; by ABL2 modification. The interval 36–55 (QEVFEKTKRLLFLGAQAYLD) is interaction with BCL2L1 isoform Bcl-x(L) and inhibition of BCL2L1 anti-apoptotic activity. At S70 the chain carries Phosphoserine. Positions 105–123 (DPSGVASIACSSCVRAVDG) are interaction with coxsackievirus B3 VP2.

As to quaternary structure, binds through its N-terminal region to the C-terminus of CD27 and to PXMP2/PMP22. Binds to the C-terminus of TNFRSF18/GITR. Isoform 1 binds to BCL2L1/BCLX isoform Bcl-x(L) but not to BAX. (Microbial infection) Interacts with coxsackievirus B3 capsid protein VP2; this interaction inhibits the binding of SIVA1 to CD27. It depends on Zn(2+) as a cofactor. In terms of processing, phosphorylated by ABL2/ARG in response to oxidative stress. Ubiquitous. Mostly expressed in thymus, testis, ovary, prostate, small intestine and spleen and less in colon.

It is found in the cytoplasm. The protein resides in the nucleus. In terms of biological role, induces CD27-mediated apoptosis. Inhibits BCL2L1 isoform Bcl-x(L) anti-apoptotic activity. Inhibits activation of NF-kappa-B and promotes T-cell receptor-mediated apoptosis. In Homo sapiens (Human), this protein is Apoptosis regulatory protein Siva (SIVA1).